The following is a 402-amino-acid chain: NADH-quinone oxidoreductase subunit D (402 aa).

It belongs to the complex I 49 kDa subunit family. As to quaternary structure, NDH-1 is composed of 14 different subunits. Subunits NuoB, C, D, E, F, and G constitute the peripheral sector of the complex.

The protein resides in the cell inner membrane. The catalysed reaction is a quinone + NADH + 5 H(+)(in) = a quinol + NAD(+) + 4 H(+)(out). NDH-1 shuttles electrons from NADH, via FMN and iron-sulfur (Fe-S) centers, to quinones in the respiratory chain. The immediate electron acceptor for the enzyme in this species is believed to be ubiquinone. Couples the redox reaction to proton translocation (for every two electrons transferred, four hydrogen ions are translocated across the cytoplasmic membrane), and thus conserves the redox energy in a proton gradient. The protein is NADH-quinone oxidoreductase subunit D of Xanthobacter autotrophicus (strain ATCC BAA-1158 / Py2).